The chain runs to 573 residues: 2-succinyl-5-enolpyruvyl-6-hydroxy-3-cyclohexene-1-carboxylate synthase (573 aa).

This sequence belongs to the TPP enzyme family. MenD subfamily. Homodimer. Mg(2+) is required as a cofactor. It depends on Mn(2+) as a cofactor. Thiamine diphosphate serves as cofactor.

The enzyme catalyses isochorismate + 2-oxoglutarate + H(+) = 5-enolpyruvoyl-6-hydroxy-2-succinyl-cyclohex-3-ene-1-carboxylate + CO2. It functions in the pathway quinol/quinone metabolism; 1,4-dihydroxy-2-naphthoate biosynthesis; 1,4-dihydroxy-2-naphthoate from chorismate: step 2/7. The protein operates within quinol/quinone metabolism; menaquinone biosynthesis. Catalyzes the thiamine diphosphate-dependent decarboxylation of 2-oxoglutarate and the subsequent addition of the resulting succinic semialdehyde-thiamine pyrophosphate anion to isochorismate to yield 2-succinyl-5-enolpyruvyl-6-hydroxy-3-cyclohexene-1-carboxylate (SEPHCHC). This is 2-succinyl-5-enolpyruvyl-6-hydroxy-3-cyclohexene-1-carboxylate synthase from Shewanella putrefaciens (strain CN-32 / ATCC BAA-453).